We begin with the raw amino-acid sequence, 283 residues long: MELWYTDQHTKDVRFSIKMKEQLVSVESEFQRIDIIETYEYGRVLVLDGEMMITEKDEFIYHEMITHVPMAVHPNIRNVLVIGAGDGGTIRELTKYDTIEHIDMVEVDKEIVQVCREYMPFTACKLNDKRVSMHFEEGLRFVRGKQDEYDLIIVDCADPFGPAEGLFTREFYGNCYKALHDDGILINQHESPFYNEHSGSVQKAHRHITAVFPLSTVYQCHIPSYPSGHWLFGFASKKYDPIKDLNDKKWNELKLPVRYYNTDLHKGCFYLPNYVKELLGSYE.

Residues 2-237 (ELWYTDQHTK…GHWLFGFASK (236 aa)) form the PABS domain. Q31 serves as a coordination point for S-methyl-5'-thioadenosine. Residues H62 and D86 each coordinate spermidine. S-methyl-5'-thioadenosine is bound by residues E106 and 137–138 (EG). The active-site Proton acceptor is the D155. 155–158 (DCAD) is a spermidine binding site. P162 contacts S-methyl-5'-thioadenosine.

This sequence belongs to the spermidine/spermine synthase family. In terms of assembly, homodimer or homotetramer.

The protein localises to the cytoplasm. It catalyses the reaction S-adenosyl 3-(methylsulfanyl)propylamine + putrescine = S-methyl-5'-thioadenosine + spermidine + H(+). Its pathway is amine and polyamine biosynthesis; spermidine biosynthesis; spermidine from putrescine: step 1/1. Functionally, catalyzes the irreversible transfer of a propylamine group from the amino donor S-adenosylmethioninamine (decarboxy-AdoMet) to putrescine (1,4-diaminobutane) to yield spermidine. The sequence is that of Polyamine aminopropyltransferase from Lachnoclostridium phytofermentans (strain ATCC 700394 / DSM 18823 / ISDg) (Clostridium phytofermentans).